The primary structure comprises 41 residues: Pi-stichotoxin-Hcr5c (41 aa).

3 cysteine pairs are disulfide-bonded: Cys-4–Cys-37, Cys-6–Cys-30, and Cys-20–Cys-38.

Belongs to the sea anemone type 3 (BDS) potassium channel toxin family.

It is found in the secreted. The protein resides in the nematocyst. In terms of biological role, weakly and reversibly inhibits rat homomeric ASIC1 (isoform ASIC1a) (IC(50)=4.95 uM), and ASIC3 (IC(50)=17 uM). ASIC1a current inhibition and ASIC3 transient current inhibition are not complete, and reach a maximum of 70% inhibition and 80%, respectively. The protein is Pi-stichotoxin-Hcr5c of Radianthus crispa (Leathery sea anemone).